A 563-amino-acid chain; its full sequence is Tripeptidyl-peptidase 1 (563 aa).

The signal sequence occupies residues 1 to 19 (MGPRSGLLGLFALFVAGKC). Positions 20–195 (SYSPEPDQQR…PEPQVPGTVG (176 aa)) are cleaved as a propeptide — removed in mature form. A disulfide bridge links cysteine 111 with cysteine 122. A Peptidase S53 domain is found at 199–563 (GVTPSVIRKR…PALLKTLMNP (365 aa)). 2 N-linked (GlcNAc...) asparagine glycosylation sites follow: asparagine 210 and asparagine 222. Residues glutamate 272 and aspartate 276 each act as charge relay system in the active site. N-linked (GlcNAc...) asparagine glycans are attached at residues asparagine 286, asparagine 313, and asparagine 443. 2 cysteine pairs are disulfide-bonded: cysteine 365–cysteine 526 and cysteine 522–cysteine 537. Serine 475 serves as the catalytic Charge relay system. Positions 517 and 518 each coordinate Ca(2+). The Ca(2+) site is built by glycine 539, glycine 541, and aspartate 543.

As to quaternary structure, monomer. Interacts with CLN5. Interacts with CLN3. Ca(2+) serves as cofactor. In terms of processing, activated by autocatalytic proteolytical processing upon acidification. N-glycosylation is required for processing and activity.

The protein localises to the lysosome. It is found in the melanosome. It catalyses the reaction Release of an N-terminal tripeptide from a polypeptide, but also has endopeptidase activity.. Lysosomal serine protease with tripeptidyl-peptidase I activity. May act as a non-specific lysosomal peptidase which generates tripeptides from the breakdown products produced by lysosomal proteinases. Requires substrates with an unsubstituted N-terminus. The sequence is that of Tripeptidyl-peptidase 1 (TPP1) from Bos taurus (Bovine).